The sequence spans 486 residues: Cephamycin export protein CmcT (486 aa).

14 helical membrane-spanning segments follow: residues 24–44, 56–76, 88–108, 121–141, 153–173, 178–198, 210–230, 241–261, 284–304, 317–337, 345–365, 369–389, 418–438, and 450–470; these read VLACTAHFLVVFDTSVITVAL, ASLQWVVNSYTLAFAGLLLFG, VFLGGLAVFTLTSLIGGLATS, AGAAVLAPLAVTMLTTSFAEG, AVALVGGASGNLLGGVFTEFL, VLLVNVPIGIPVLFLAARVLA, LDLPGAVLATAGLTLLTLGVS, AVAVPLAGGLLALLAFVVVEA, LAMLLAGASQVPVWFFLTLSM, LGFVPHALVMLVVGLRVVPWL, VLIAAGAAIGALGFWWQSLLT, AYLGGILGPAVLISIGGGLVG, FGGAFGLAVLLTVTGSGTSGS, and FVGIAVFMLAIAVLTPVLPAL.

This sequence belongs to the major facilitator superfamily.

The protein localises to the cell membrane. Involved in cephamycin export. This is Cephamycin export protein CmcT (cmcT) from Amycolatopsis lactamdurans (Nocardia lactamdurans).